We begin with the raw amino-acid sequence, 520 residues long: Ribonuclease Y 2 (520 aa).

The chain crosses the membrane as a helical span at residues 7 to 23; the sequence is VVLLLASIGVGYGLRAK. Positions 206–269 constitute a KH domain; that stretch reads NHRSFIAENA…AVAMETMEMI (64 aa). One can recognise an HD domain in the interval 332–425; sequence ILEHSIETAK…VEAADAISGA (94 aa).

This sequence belongs to the RNase Y family.

Its subcellular location is the cell membrane. Endoribonuclease that initiates mRNA decay. This is Ribonuclease Y 2 from Pediococcus pentosaceus (strain ATCC 25745 / CCUG 21536 / LMG 10740 / 183-1w).